An 849-amino-acid polypeptide reads, in one-letter code: Villin-1 (849 aa).

5 Gelsolin-like repeats span residues 30–107 (IEKS…DKFL), 147–213 (RVTE…EDGK), 262–335 (VPVE…TVEF), 405–475 (QEQL…PEMF), and 527–566 (AIQVDLAASSLNSSHCYILQAGGSFFTWLGSLSSPSDHNL). Residues 739-849 (ETPERSLRKS…AVATGTPRRL (111 aa)) form a disordered region. 2 stretches are compositionally biased toward low complexity: residues 747–782 (KSSSSSLPRRSPGTSSSEPTTPEQRAAARTFASAST) and 791–823 (PAALSPSLSTPSPSPRSRSSASSSPASWNSTPS).

The protein belongs to the villin/gelsolin family.

The protein resides in the cytoplasm. It is found in the cytoskeleton. Functionally, ca(2+)-independent actin-binding protein. Binds actin microfilaments (MFs). Involved in actin filament bundling, severing and capping. Caps the barbed end of actin filaments and protects them from disassembly. Promotes VLN3-mediated MF severing. The sequence is that of Villin-1 from Oryza sativa subsp. indica (Rice).